Reading from the N-terminus, the 441-residue chain is Glutamate--tRNA ligase 1 (441 aa).

Positions Pro-7–Asn-17 match the 'HIGH' region motif. The 'KMSKS' region signature appears at Lys-236–Arg-240. Lys-239 serves as a coordination point for ATP.

It belongs to the class-I aminoacyl-tRNA synthetase family. Glutamate--tRNA ligase type 1 subfamily. In terms of assembly, monomer.

The protein resides in the cytoplasm. The catalysed reaction is tRNA(Glu) + L-glutamate + ATP = L-glutamyl-tRNA(Glu) + AMP + diphosphate. In terms of biological role, catalyzes the attachment of glutamate to tRNA(Glu) in a two-step reaction: glutamate is first activated by ATP to form Glu-AMP and then transferred to the acceptor end of tRNA(Glu). The protein is Glutamate--tRNA ligase 1 of Anaplasma marginale (strain St. Maries).